We begin with the raw amino-acid sequence, 258 residues long: Indole-3-glycerol phosphate synthase (258 aa).

The protein belongs to the TrpC family.

It catalyses the reaction 1-(2-carboxyphenylamino)-1-deoxy-D-ribulose 5-phosphate + H(+) = (1S,2R)-1-C-(indol-3-yl)glycerol 3-phosphate + CO2 + H2O. Its pathway is amino-acid biosynthesis; L-tryptophan biosynthesis; L-tryptophan from chorismate: step 4/5. The chain is Indole-3-glycerol phosphate synthase from Campylobacter fetus subsp. fetus (strain 82-40).